The following is a 1057-amino-acid chain: Desmoglein-1-alpha (1057 aa).

The signal sequence occupies residues 1-23 (MDWHSFRIAALLLTSLVVLEVNS). Positions 24 to 49 (EFQIQVRDHNAKNGTIKWHSIRRQKR) are excised as a propeptide. 4 consecutive Cadherin domains span residues 50–157 (EWIK…PPVF), 158–269 (SMTT…IPYL), 270–389 (EQSS…RPGS), and 386–493 (RPGS…TGSE). The Extracellular segment spans residues 50-564 (EWIKFAAACR…LYGDNVHFGP (515 aa)). 2 N-linked (GlcNAc...) asparagine glycosylation sites follow: N110 and N180. Positions 490 to 552 (TGSESGGSSS…FQGDPDETLE (63 aa)) are disordered. Positions 510–525 (NGYQGTSSTENPQRVT) are enriched in polar residues. The chain crosses the membrane as a helical span at residues 565 to 585 (AGIGLLIMGFLVLGLVPFLLI). The Cytoplasmic segment spans residues 586 to 1057 (CCDCGGAPGG…TKYNTVQYSK (472 aa)). Desmoglein repeat repeat units lie at residues 832–858 (AYHS…TVRE), 859–888 (SYTT…ERVV), 889–918 (GPIS…ERVI), 919–946 (APGS…ERVI), and 947–975 (QPTS…ERVV).

Binds to JUP/plakoglobin. Interacts with PKP2. Interacts with DSC3; there is evidence to suggest that the interaction promotes cell-cell adhesion of keratinocytes. As to expression, expressed in testis.

The protein localises to the cell membrane. It is found in the cell junction. The protein resides in the desmosome. It localises to the cytoplasm. Its subcellular location is the nucleus. In terms of biological role, component of intercellular desmosome junctions. Involved in the interaction of plaque proteins and intermediate filaments mediating cell-cell adhesion. The sequence is that of Desmoglein-1-alpha (Dsg1a) from Mus musculus (Mouse).